A 96-amino-acid chain; its full sequence is Interleukin-8 (96 aa).

The N-terminal stretch at Met-1–Ala-22 is a signal peptide. Arg-27 carries the citrulline modification. 2 disulfides stabilise this stretch: Cys-34-Cys-61 and Cys-36-Cys-78.

It belongs to the intercrine alpha (chemokine CxC) family. As to quaternary structure, homodimer. Interacts with TNFAIP6 (via Link domain); this interaction interferes with chemokine binding to glycosaminoglycans. Post-translationally, citrullination at Arg-27 prevents proteolysis, and dampens tissue inflammation, it also enhances leukocytosis, possibly through impaired chemokine clearance from the blood circulation.

The protein localises to the secreted. Functionally, chemotactic factor that mediates inflammatory response by attracting neutrophils, basophils, and T-cells to clear pathogens and protect the host from infection. Also plays an important role in neutrophil activation. Released in response to an inflammatory stimulus, exerts its effect by binding to the G-protein-coupled receptors CXCR1 and CXCR2, primarily found in neutrophils, monocytes and endothelial cells. G-protein heterotrimer (alpha, beta, gamma subunits) constitutively binds to CXCR1/CXCR2 receptor and activation by IL8 leads to beta and gamma subunits release from Galpha (GNAI2 in neutrophils) and activation of several downstream signaling pathways including PI3K and MAPK pathways. The sequence is that of Interleukin-8 (CXCL8) from Dasypus novemcinctus (Nine-banded armadillo).